Consider the following 338-residue polypeptide: Adenylosuccinate synthetase (338 aa).

GTP is bound by residues 12–18 and 42–44; these read GDEGKGK and GHT. The active-site Proton acceptor is the D13. D13 and G42 together coordinate Mg(2+). IMP-binding positions include 13–16, 40–43, T127, R141, Q179, T194, and R256; these read DEGK and NAGH. H43 acts as the Proton donor in catalysis. 252 to 258 serves as a coordination point for substrate; sequence TVTGRRR. Residues R258, 284 to 286, and 324 to 326 contribute to the GTP site; these read CLD and STG.

Belongs to the adenylosuccinate synthetase family. As to quaternary structure, homodimer. Requires Mg(2+) as cofactor.

The protein resides in the cytoplasm. The catalysed reaction is IMP + L-aspartate + GTP = N(6)-(1,2-dicarboxyethyl)-AMP + GDP + phosphate + 2 H(+). It participates in purine metabolism; AMP biosynthesis via de novo pathway; AMP from IMP: step 1/2. Plays an important role in the de novo pathway of purine nucleotide biosynthesis. Catalyzes the first committed step in the biosynthesis of AMP from IMP. This chain is Adenylosuccinate synthetase, found in Methanococcus vannielii (strain ATCC 35089 / DSM 1224 / JCM 13029 / OCM 148 / SB).